The chain runs to 507 residues: uncharacterized protein (507 aa).

Low complexity predominate over residues 1–12 (MEKSISSISKAS). The tract at residues 1-20 (MEKSISSISKASMNSDEKLD) is disordered. 12 consecutive transmembrane segments (helical) span residues 57–74 (FDFR…FNAL), 100–120 (IMIS…SYLY), 126–146 (ARIL…QAAV), 157–177 (WFLG…LTTF), 189–209 (IFYA…YGVF), 221–241 (YLFL…FLVL), 283–303 (VFKH…GVPL), 326–346 (LMTV…AFIS), 353–373 (GIVL…YGSI), 379–399 (IGVS…SSVL), 416–436 (VFTS…ANIF), and 445–465 (VPAL…VASI).

It belongs to the major facilitator superfamily. Allantoate permease family.

Its subcellular location is the endoplasmic reticulum. The protein resides in the membrane. This is an uncharacterized protein from Schizosaccharomyces pombe (strain 972 / ATCC 24843) (Fission yeast).